The sequence spans 212 residues: Adenylate kinase (212 aa).

10-15 contacts ATP; sequence GAGKGT. The segment at 30 to 59 is NMP; that stretch reads STGDMFRAAMANQTEMGRLAKSYIDKGELV. AMP contacts are provided by residues Thr-31, Arg-36, 57–59, 86–89, and Gln-93; these read ELV and GYPR. The LID stretch occupies residues 127–159; it reads GRIINRKTGETFHKVFNPPVDYKEEDYYQREDD. Residues Arg-128 and 137-138 contribute to the ATP site; that span reads TF. AMP-binding residues include Arg-156 and Arg-167. Gln-195 serves as a coordination point for ATP.

Monomer.

The protein resides in the cytoplasm. The catalysed reaction is AMP + ATP = 2 ADP. Its pathway is purine metabolism; AMP biosynthesis via salvage pathway; AMP from ADP: step 1/1. Its function is as follows. Catalyzes the reversible transfer of the terminal phosphate group between ATP and AMP. Plays an important role in cellular energy homeostasis and in adenine nucleotide metabolism. In Streptococcus pyogenes serotype M6 (strain ATCC BAA-946 / MGAS10394), this protein is Adenylate kinase.